A 360-amino-acid polypeptide reads, in one-letter code: 3-dehydroquinate synthase (360 aa).

Residues 70–75 (DGEKYK), 104–108 (GVIGD), 128–129 (TT), lysine 141, and lysine 150 contribute to the NAD(+) site. Residues glutamate 183, histidine 246, and histidine 263 each contribute to the Zn(2+) site.

Belongs to the sugar phosphate cyclases superfamily. Dehydroquinate synthase family. Co(2+) serves as cofactor. Requires Zn(2+) as cofactor. It depends on NAD(+) as a cofactor.

It is found in the cytoplasm. It carries out the reaction 7-phospho-2-dehydro-3-deoxy-D-arabino-heptonate = 3-dehydroquinate + phosphate. The protein operates within metabolic intermediate biosynthesis; chorismate biosynthesis; chorismate from D-erythrose 4-phosphate and phosphoenolpyruvate: step 2/7. Its function is as follows. Catalyzes the conversion of 3-deoxy-D-arabino-heptulosonate 7-phosphate (DAHP) to dehydroquinate (DHQ). This is 3-dehydroquinate synthase from Acinetobacter baumannii (strain SDF).